The following is a 503-amino-acid chain: WD repeat-containing protein 55 homolog (503 aa).

Disordered stretches follow at residues 1–21 (MHTH…DLDD) and 35–132 (ALVG…DDLD). 3 stretches are compositionally biased toward acidic residues: residues 12 to 21 (DADELDDLDD), 40 to 50 (DVSDSDIDEHD), and 78 to 96 (NAED…DEAE). 6 WD repeats span residues 157–196 (KLED…NKLL), 201–242 (VHSK…KLYE), 244–282 (AHDD…PIFE), 285–324 (EVED…LYVQ), 327–366 (PYEE…YHCD), and 411–450 (QHNM…DFGD). Residues 483–503 (TKEDEDNADNNDAAAGPSNSA) form a disordered region.

This sequence belongs to the WD repeat WDR55 family.

The polypeptide is WD repeat-containing protein 55 homolog (Drosophila persimilis (Fruit fly)).